A 147-amino-acid polypeptide reads, in one-letter code: Large ribosomal subunit protein uL15 (147 aa).

The disordered stretch occupies residues 1–54 (MRLSDIKPTPGSMKKRTRVGRGIGSGKGKTSGKGHKGQKARGRGKVHPWFEGGQ). A compositionally biased stretch (basic residues) spans 30–46 (TSGKGHKGQKARGRGKV).

This sequence belongs to the universal ribosomal protein uL15 family. In terms of assembly, part of the 50S ribosomal subunit.

Binds to the 23S rRNA. In Thermosipho melanesiensis (strain DSM 12029 / CIP 104789 / BI429), this protein is Large ribosomal subunit protein uL15.